The following is a 327-amino-acid chain: GMP reductase (327 aa).

The active-site Thioimidate intermediate is cysteine 175. Isoleucine 204–valine 227 contributes to the NADP(+) binding site.

This sequence belongs to the IMPDH/GMPR family. GuaC type 2 subfamily.

The enzyme catalyses IMP + NH4(+) + NADP(+) = GMP + NADPH + 2 H(+). Functionally, catalyzes the irreversible NADPH-dependent deamination of GMP to IMP. It functions in the conversion of nucleobase, nucleoside and nucleotide derivatives of G to A nucleotides, and in maintaining the intracellular balance of A and G nucleotides. The chain is GMP reductase from Bacillus cereus (strain ZK / E33L).